Reading from the N-terminus, the 719-residue chain is Fusicoccadiene synthase (719 aa).

The tract at residues 1 to 334 (MEFKYSEVVE…RYNPDVSFNK (334 aa)) is fusicocca-2,10(14)-diene synthase. Residues aspartate 92 and aspartate 96 each contribute to the Mg(2+) site. Positions 335 to 719 (TQLEWMRQGL…MRLLLELLRV (385 aa)) are geranylgeranyl diphosphate synthase. Positions 358-404 (EIDSDESAVSPTADESDSTEDSLGSGSRQDSSLSTGLSLSPVHSNEG) are disordered. A compositionally biased stretch (polar residues) spans 378–400 (DSLGSGSRQDSSLSTGLSLSPVH). Lysine 435, arginine 438, and histidine 467 together coordinate isopentenyl diphosphate. Mg(2+) is bound by residues aspartate 474 and aspartate 478. Arginine 483 provides a ligand contact to dimethylallyl diphosphate. Residue arginine 484 coordinates isopentenyl diphosphate. Dimethylallyl diphosphate-binding residues include lysine 561, threonine 562, glutamine 602, asparagine 609, lysine 619, and lysine 629.

The protein in the N-terminal section; belongs to the terpene synthase family. This sequence in the C-terminal section; belongs to the FPP/GGPP synthase family. In terms of assembly, hexamer.

The catalysed reaction is geranylgeranyl diphosphate = fusicocca-2,10(14)-diene + diphosphate. The enzyme catalyses isopentenyl diphosphate + (2E,6E)-farnesyl diphosphate = (2E,6E,10E)-geranylgeranyl diphosphate + diphosphate. It functions in the pathway mycotoxin biosynthesis. Multifunctional diterpene synthase; part of the 2 gene clusters that mediate the biosynthesis of fusicoccins, diterpene glucosides that display phytohormone-like activity and function as potent activators of plasma membrane H(+)-ATPases in plants by modifying 14-3-3 proteins and cause the plant disease constriction canker. The first step in the pathway is performed by the fusicoccadiene synthase PaFS that possesses both prenyl transferase and terpene cyclase activity, converting isopentenyl diphosphate and dimethylallyl diphosphate into geranylgeranyl diphosphate (GGDP) and successively converting GGDP into fusicocca-2,10(14)-diene, a precursor for fusicoccin H. Fusicoccadiene synthase is an allosteric enzyme for GGPP cyclization that generates 64% fusicoccadiene, 9% delta-araneosene, and one additional unidentified diterpene product, when incubated with GGPP. In the absence of isopentenyl diphosphate (IPP), PaFS can also solvolyze the shorter chain geranyl diphosphate (GPP) and farnesyl diphosphate (FPP) as alternative substrates to yield predominantly acyclic products. FPP is converted to farnesol (60.5%), nerolidol (14.0%), and farnesene (14.0%), while GPP is converted to a mixture of geraniol (59.5%) and linalool (35.0%). The second step is the oxidation at the C-8 position by the cytochrome P450 monooxygenase PaP450-2 to yield fusicocca-2,10(14)-diene-8-beta-ol. The cytochrome P450 monooxygenase PaP450-1 then catalyzes the hydroxylation at the C-16 position to produce fusicocca-2,10(14)-diene-8-beta,16-diol. The dioxygenase fc-dox then catalyzes the 16-oxydation of fusicocca-2,10(14)-diene-8-beta,16-diol to yield an aldehyde (8-beta-hydroxyfusicocca-1,10(14)-dien-16-al). The short-chain dehydrogenase/reductase fc-sdr catalyzes the reduction of the aldehyde to yield fusicocca-1,10(14)-diene-8-beta,16-diol. The next step is the hydroxylation at C-9 performed by the cytochrome P450 monooxygenase PaP450-3 that leads to fusicoccin H aglycon which is glycosylated to fusicoccin H by the O-glycosyltransferase PAGT. Hydroxylation at C-12 by the cytochrome P450 monooxygenase PaP450-4 leads then to the production of fusicoccin Q and is followed by methylation by the O-methyltransferase PAMT to yield fusicoccin P. Fusicoccin P is further converted to fusicoccin J via prenylation by the O-glucose prenyltransferase PaPT. Cytochrome P450 monooxygenase PaP450-5 then performs hydroxylation at C-19 to yield dideacetyl-fusicoccin A which is acetylated to 3'-O-deacetyl-fusicoccin A by the O-acetyltransferase PaAT-2. Finally, a another acetylation by the O-acetyltransferase PaAT-1 yields fusicoccin A. The sequence is that of Fusicoccadiene synthase from Phomopsis amygdali (Fusicoccum amygdali).